Here is a 389-residue protein sequence, read N- to C-terminus: Dihydroorotase (389 aa).

Zn(2+)-binding residues include His-51 and His-53. Residues 53-55 (HVR) and Asn-85 each bind substrate. Residues Lys-133, His-158, His-192, and Asp-254 each contribute to the Zn(2+) site. Lys-133 carries the post-translational modification N6-carboxylysine. Asp-254 is a catalytic residue. Substrate-binding positions include His-258 and 272–273 (PG).

This sequence belongs to the metallo-dependent hydrolases superfamily. DHOase family. Class I DHOase subfamily. Zn(2+) is required as a cofactor.

The enzyme catalyses (S)-dihydroorotate + H2O = N-carbamoyl-L-aspartate + H(+). It functions in the pathway pyrimidine metabolism; UMP biosynthesis via de novo pathway; (S)-dihydroorotate from bicarbonate: step 3/3. In terms of biological role, catalyzes the reversible cyclization of carbamoyl aspartate to dihydroorotate. The protein is Dihydroorotase of Sulfurisphaera tokodaii (strain DSM 16993 / JCM 10545 / NBRC 100140 / 7) (Sulfolobus tokodaii).